A 257-amino-acid polypeptide reads, in one-letter code: Zinc import ATP-binding protein ZnuC (257 aa).

The region spanning 5–220 (ITLKNVAVNF…PEFIAMFGHH (216 aa)) is the ABC transporter domain. ATP is bound at residue 37 to 44 (GPNGAGKS).

It belongs to the ABC transporter superfamily. Zinc importer (TC 3.A.1.15.5) family. As to quaternary structure, the complex is composed of two ATP-binding proteins (ZnuC), two transmembrane proteins (ZnuB) and a solute-binding protein (ZnuA).

The protein resides in the cell inner membrane. It carries out the reaction Zn(2+)(out) + ATP(in) + H2O(in) = Zn(2+)(in) + ADP(in) + phosphate(in) + H(+)(in). Its function is as follows. Part of the ABC transporter complex ZnuABC involved in zinc import. Responsible for energy coupling to the transport system. The chain is Zinc import ATP-binding protein ZnuC from Photorhabdus laumondii subsp. laumondii (strain DSM 15139 / CIP 105565 / TT01) (Photorhabdus luminescens subsp. laumondii).